The primary structure comprises 618 residues: DNA mismatch repair protein MutL (618 aa).

Positions 366 to 381 (AEPTAAREPATPRYSG) are enriched in low complexity. Residues 366–405 (AEPTAAREPATPRYSGGTSGGNGGRQSAGGWPHAQPGYQK) form a disordered region. The segment covering 382–392 (GTSGGNGGRQS) has biased composition (gly residues).

It belongs to the DNA mismatch repair MutL/HexB family.

Its function is as follows. This protein is involved in the repair of mismatches in DNA. It is required for dam-dependent methyl-directed DNA mismatch repair. May act as a 'molecular matchmaker', a protein that promotes the formation of a stable complex between two or more DNA-binding proteins in an ATP-dependent manner without itself being part of a final effector complex. The polypeptide is DNA mismatch repair protein MutL (Salmonella agona (strain SL483)).